Consider the following 203-residue polypeptide: Histidine biosynthesis bifunctional protein HisIE (203 aa).

The phosphoribosyl-AMP cyclohydrolase stretch occupies residues 1-114 (MLTEQQRREL…FGDTAHQWLF (114 aa)). The phosphoribosyl-ATP pyrophosphohydrolase stretch occupies residues 115–203 (LYQLEQLLAE…VIENLRKRHQ (89 aa)).

It in the N-terminal section; belongs to the PRA-CH family. In the C-terminal section; belongs to the PRA-PH family.

The protein resides in the cytoplasm. The catalysed reaction is 1-(5-phospho-beta-D-ribosyl)-ATP + H2O = 1-(5-phospho-beta-D-ribosyl)-5'-AMP + diphosphate + H(+). The enzyme catalyses 1-(5-phospho-beta-D-ribosyl)-5'-AMP + H2O = 1-(5-phospho-beta-D-ribosyl)-5-[(5-phospho-beta-D-ribosylamino)methylideneamino]imidazole-4-carboxamide. The protein operates within amino-acid biosynthesis; L-histidine biosynthesis; L-histidine from 5-phospho-alpha-D-ribose 1-diphosphate: step 2/9. It functions in the pathway amino-acid biosynthesis; L-histidine biosynthesis; L-histidine from 5-phospho-alpha-D-ribose 1-diphosphate: step 3/9. This Shigella sonnei (strain Ss046) protein is Histidine biosynthesis bifunctional protein HisIE.